Reading from the N-terminus, the 222-residue chain is Uracil-DNA glycosylase (222 aa).

Aspartate 66 serves as the catalytic Proton acceptor.

Belongs to the uracil-DNA glycosylase (UDG) superfamily. UNG family.

Its subcellular location is the cytoplasm. The catalysed reaction is Hydrolyzes single-stranded DNA or mismatched double-stranded DNA and polynucleotides, releasing free uracil.. Excises uracil residues from the DNA which can arise as a result of misincorporation of dUMP residues by DNA polymerase or due to deamination of cytosine. The protein is Uracil-DNA glycosylase of Porphyromonas gingivalis (strain ATCC BAA-308 / W83).